Here is a 454-residue protein sequence, read N- to C-terminus: tRNA modification GTPase MnmE (454 aa).

(6S)-5-formyl-5,6,7,8-tetrahydrofolate is bound by residues Arg23, Glu80, and Lys120. Positions 216–377 constitute a TrmE-type G domain; it reads GMKVVIAGRP…LRDHLKQSMG (162 aa). Residue Asn226 coordinates K(+). GTP is bound by residues 226–231, 245–251, 270–273, 335–338, and 358–360; these read NAGKSS, TDIAGTT, DTAG, NKAD, and SAR. Ser230 is a binding site for Mg(2+). Positions 245, 247, and 250 each coordinate K(+). Thr251 provides a ligand contact to Mg(2+). Residue Lys454 participates in (6S)-5-formyl-5,6,7,8-tetrahydrofolate binding.

Belongs to the TRAFAC class TrmE-Era-EngA-EngB-Septin-like GTPase superfamily. TrmE GTPase family. Homodimer. Heterotetramer of two MnmE and two MnmG subunits. It depends on K(+) as a cofactor.

It localises to the cytoplasm. In terms of biological role, exhibits a very high intrinsic GTPase hydrolysis rate. Involved in the addition of a carboxymethylaminomethyl (cmnm) group at the wobble position (U34) of certain tRNAs, forming tRNA-cmnm(5)s(2)U34. This Yersinia pseudotuberculosis serotype O:3 (strain YPIII) protein is tRNA modification GTPase MnmE.